Reading from the N-terminus, the 491-residue chain is Lysine--tRNA ligase 1 (491 aa).

Positions 400 and 407 each coordinate Mg(2+).

Belongs to the class-II aminoacyl-tRNA synthetase family. As to quaternary structure, homodimer. The cofactor is Mg(2+).

Its subcellular location is the cytoplasm. The catalysed reaction is tRNA(Lys) + L-lysine + ATP = L-lysyl-tRNA(Lys) + AMP + diphosphate. This chain is Lysine--tRNA ligase 1, found in Mycoplasmopsis pulmonis (strain UAB CTIP) (Mycoplasma pulmonis).